The chain runs to 351 residues: Farnesyl pyrophosphate synthase (351 aa).

The isopentenyl diphosphate site is built by K51, R54, and Q92. 2 residues coordinate Mg(2+): D99 and D103. R108 is a dimethylallyl diphosphate binding site. Residue R109 coordinates isopentenyl diphosphate. Residues K196, T197, Q236, K253, and K262 each coordinate dimethylallyl diphosphate.

This sequence belongs to the FPP/GGPP synthase family. It depends on Mg(2+) as a cofactor.

The catalysed reaction is isopentenyl diphosphate + dimethylallyl diphosphate = (2E)-geranyl diphosphate + diphosphate. It carries out the reaction isopentenyl diphosphate + (2E)-geranyl diphosphate = (2E,6E)-farnesyl diphosphate + diphosphate. It functions in the pathway isoprenoid biosynthesis; farnesyl diphosphate biosynthesis; farnesyl diphosphate from geranyl diphosphate and isopentenyl diphosphate: step 1/1. Its pathway is isoprenoid biosynthesis; geranyl diphosphate biosynthesis; geranyl diphosphate from dimethylallyl diphosphate and isopentenyl diphosphate: step 1/1. Farnesyl pyrophosphate synthase; part of the second module of ergosterol biosynthesis pathway that includes the middle steps of the pathway. ERG20 catalyzes the sequential condensation of isopentenyl pyrophosphate with dimethylallyl pyrophosphate, and then with the resultant geranylpyrophosphate to the ultimate product farnesyl pyrophosphate. The second module is carried out in the vacuole and involves the formation of farnesyl diphosphate, which is also an important intermediate in the biosynthesis of ubiquinone, dolichol, heme and prenylated proteins. Activity by the mevalonate kinase ERG12 first converts mevalonate into 5-phosphomevalonate. 5-phosphomevalonate is then further converted to 5-diphosphomevalonate by the phosphomevalonate kinase ERG8. The diphosphomevalonate decarboxylase MVD then produces isopentenyl diphosphate. The isopentenyl-diphosphate delta-isomerase IDI1 then catalyzes the 1,3-allylic rearrangement of the homoallylic substrate isopentenyl (IPP) to its highly electrophilic allylic isomer, dimethylallyl diphosphate (DMAPP). Finally the farnesyl diphosphate synthase ERG20 catalyzes the sequential condensation of isopentenyl pyrophosphate with dimethylallyl pyrophosphate, and then with the resultant geranylpyrophosphate to the ultimate product farnesyl pyrophosphate. This chain is Farnesyl pyrophosphate synthase, found in Candida albicans (strain SC5314 / ATCC MYA-2876) (Yeast).